Reading from the N-terminus, the 233-residue chain is Large ribosomal subunit protein uL1 (233 aa).

The protein belongs to the universal ribosomal protein uL1 family. Part of the 50S ribosomal subunit.

Binds directly to 23S rRNA. The L1 stalk is quite mobile in the ribosome, and is involved in E site tRNA release. Functionally, protein L1 is also a translational repressor protein, it controls the translation of the L11 operon by binding to its mRNA. The chain is Large ribosomal subunit protein uL1 from Thermotoga maritima (strain ATCC 43589 / DSM 3109 / JCM 10099 / NBRC 100826 / MSB8).